Reading from the N-terminus, the 295-residue chain is Xyloglucan endotransglucosylase/hydrolase (295 aa).

The N-terminal stretch at 1–23 (MAVSSTPWALVALFLMASSTVMA) is a signal peptide. In terms of domain architecture, GH16 spans 25–222 (PPRKAIDVPF…WANAPFIASY (198 aa)). The Nucleophile role is filled by Glu108. Residue Glu112 is the Proton donor of the active site. Glu112 is a xyloglucan binding site. Asn116 carries N-linked (GlcNAc...) asparagine glycosylation. Residues 125 to 127 (QTN), 135 to 137 (NRE), 201 to 202 (DW), and Gly206 contribute to the xyloglucan site. 2 cysteine pairs are disulfide-bonded: Cys230-Cys239 and Cys276-Cys289. Arg281 contacts xyloglucan.

It belongs to the glycosyl hydrolase 16 family. XTH group 1 subfamily. In terms of processing, contains at least one intrachain disulfide bond essential for its enzymatic activity. The N-glycan consists of an (GlcNAc)2(Hex)6 oligosaccharide; not essential for its enzymatic activity.

The protein localises to the secreted. Its subcellular location is the cell wall. The protein resides in the extracellular space. It localises to the apoplast. It catalyses the reaction breaks a beta-(1-&gt;4) bond in the backbone of a xyloglucan and transfers the xyloglucanyl segment on to O-4 of the non-reducing terminal glucose residue of an acceptor, which can be a xyloglucan or an oligosaccharide of xyloglucan.. In terms of biological role, catalyzes xyloglucan endohydrolysis (XEH) and/or endotransglycosylation (XET). Cleaves and religates xyloglucan polymers, an essential constituent of the primary cell wall, and thereby participates in cell wall construction of growing tissues. This is Xyloglucan endotransglucosylase/hydrolase (XET16A) from Brassica oleracea var. botrytis (Cauliflower).